A 151-amino-acid polypeptide reads, in one-letter code: Macrodomain Ter protein (151 aa).

It belongs to the MatP family. Homodimer.

Its subcellular location is the cytoplasm. Required for spatial organization of the terminus region of the chromosome (Ter macrodomain) during the cell cycle. Prevents early segregation of duplicated Ter macrodomains during cell division. Binds specifically to matS, which is a 13 bp signature motif repeated within the Ter macrodomain. The chain is Macrodomain Ter protein from Yersinia pseudotuberculosis serotype IB (strain PB1/+).